Reading from the N-terminus, the 1120-residue chain is Transcription-repair-coupling factor (1120 aa).

In terms of domain architecture, Helicase ATP-binding spans 591–756 (DLTNGMLMDR…MTGLKELSII (166 aa)). 604–611 (GDVGFGKT) is an ATP binding site. The short motif at 709–712 (DEEQ) is the DEEQ box element. Residues 777 to 933 (IIRDALLREH…TIASHDADLR (157 aa)) form the Helicase C-terminal domain.

The protein in the N-terminal section; belongs to the UvrB family. It in the C-terminal section; belongs to the helicase family. RecG subfamily.

It is found in the cytoplasm. Functionally, couples transcription and DNA repair by recognizing RNA polymerase (RNAP) stalled at DNA lesions. Mediates ATP-dependent release of RNAP and its truncated transcript from the DNA, and recruitment of nucleotide excision repair machinery to the damaged site. The chain is Transcription-repair-coupling factor from Rickettsia prowazekii (strain Madrid E).